The following is a 375-amino-acid chain: Thiamine-phosphate synthase (375 aa).

The interval 1 to 127 (MTNAESRTVL…AACIESIRYQ (127 aa)) is unknown. The segment at 128–375 (CYATFRELEL…SSDVCPLPND (248 aa)) is thiamine-phosphate synthase. Residues 183 to 185 (QLR) and asparagine 215 each bind 4-amino-2-methyl-5-(diphosphooxymethyl)pyrimidine. The Mg(2+) site is built by aspartate 216 and glutamate 235. 2 residues coordinate 4-amino-2-methyl-5-(diphosphooxymethyl)pyrimidine: serine 254 and lysine 283. Glycine 315 lines the 2-[(2R,5Z)-2-carboxy-4-methylthiazol-5(2H)-ylidene]ethyl phosphate pocket.

Belongs to the thiamine-phosphate synthase family. Mg(2+) is required as a cofactor.

It carries out the reaction 2-[(2R,5Z)-2-carboxy-4-methylthiazol-5(2H)-ylidene]ethyl phosphate + 4-amino-2-methyl-5-(diphosphooxymethyl)pyrimidine + 2 H(+) = thiamine phosphate + CO2 + diphosphate. The catalysed reaction is 2-(2-carboxy-4-methylthiazol-5-yl)ethyl phosphate + 4-amino-2-methyl-5-(diphosphooxymethyl)pyrimidine + 2 H(+) = thiamine phosphate + CO2 + diphosphate. It catalyses the reaction 4-methyl-5-(2-phosphooxyethyl)-thiazole + 4-amino-2-methyl-5-(diphosphooxymethyl)pyrimidine + H(+) = thiamine phosphate + diphosphate. It participates in cofactor biosynthesis; thiamine diphosphate biosynthesis; thiamine phosphate from 4-amino-2-methyl-5-diphosphomethylpyrimidine and 4-methyl-5-(2-phosphoethyl)-thiazole: step 1/1. Its function is as follows. Condenses 4-methyl-5-(beta-hydroxyethyl)thiazole monophosphate (THZ-P) and 2-methyl-4-amino-5-hydroxymethyl pyrimidine pyrophosphate (HMP-PP) to form thiamine monophosphate (TMP). The chain is Thiamine-phosphate synthase (thiE) from Rhodopirellula baltica (strain DSM 10527 / NCIMB 13988 / SH1).